We begin with the raw amino-acid sequence, 326 residues long: dTDP-4-dehydro-6-deoxy-D-allose reductase (326 aa).

NADP(+) contacts are provided by residues 15–21 (GALGFIG) and 129–132 (MSSS). Y160 (proton donor/acceptor) is an active-site residue. Residues K164 and 187-190 (PGNV) each bind NADP(+).

It belongs to the NAD(P)-dependent epimerase/dehydratase family.

It carries out the reaction dTDP-6-deoxy-alpha-D-allose + NAD(+) = dTDP-4-dehydro-6-deoxy-alpha-D-allose + NADH + H(+). The enzyme catalyses dTDP-6-deoxy-alpha-D-allose + NADP(+) = dTDP-4-dehydro-6-deoxy-alpha-D-allose + NADPH + H(+). Its function is as follows. Catalyzes the stereospecific reduction of the C-4 keto group of dTDP-4-dehydro-6-deoxy-D-allose, leading to dTDP-6-deoxy-D-allose, an intermediate in the biosynthesis of the mycinose moiety of the chalcomycin antibiotic. The protein is dTDP-4-dehydro-6-deoxy-D-allose reductase (chmD) of Streptomyces bikiniensis.